A 732-amino-acid chain; its full sequence is 1,4-alpha-glucan branching enzyme GlgB (732 aa).

The active-site Nucleophile is the Asp409. Glu462 acts as the Proton donor in catalysis.

This sequence belongs to the glycosyl hydrolase 13 family. GlgB subfamily. Monomer.

It carries out the reaction Transfers a segment of a (1-&gt;4)-alpha-D-glucan chain to a primary hydroxy group in a similar glucan chain.. The protein operates within glycan biosynthesis; glycogen biosynthesis. Catalyzes the formation of the alpha-1,6-glucosidic linkages in glycogen by scission of a 1,4-alpha-linked oligosaccharide from growing alpha-1,4-glucan chains and the subsequent attachment of the oligosaccharide to the alpha-1,6 position. The protein is 1,4-alpha-glucan branching enzyme GlgB of Corynebacterium diphtheriae (strain ATCC 700971 / NCTC 13129 / Biotype gravis).